The chain runs to 232 residues: tRNA1(Val) (adenine(37)-N6)-methyltransferase (232 aa).

Belongs to the methyltransferase superfamily. tRNA (adenine-N(6)-)-methyltransferase family.

The protein localises to the cytoplasm. The catalysed reaction is adenosine(37) in tRNA1(Val) + S-adenosyl-L-methionine = N(6)-methyladenosine(37) in tRNA1(Val) + S-adenosyl-L-homocysteine + H(+). Specifically methylates the adenine in position 37 of tRNA(1)(Val) (anticodon cmo5UAC). In Haemophilus influenzae (strain PittEE), this protein is tRNA1(Val) (adenine(37)-N6)-methyltransferase.